The following is a 373-amino-acid chain: Cystathionine gamma-synthase/O-acetylhomoserine (thiol)-lyase (373 aa).

Lys197 carries the N6-(pyridoxal phosphate)lysine modification.

Belongs to the trans-sulfuration enzymes family. As to quaternary structure, homotetramer. The cofactor is pyridoxal 5'-phosphate.

It localises to the cytoplasm. It catalyses the reaction O-acetyl-L-homoserine + L-cysteine = L,L-cystathionine + acetate + H(+). The enzyme catalyses O-acetyl-L-homoserine + hydrogen sulfide = L-homocysteine + acetate. The protein operates within amino-acid biosynthesis; L-methionine biosynthesis via de novo pathway. Catalyzes the formation of L-cystathionine from O-acetyl-L-homoserine and L-cysteine. Cannot use O-succinyl-L-homoserine as substrate. Also exhibits O-acetylhomoserine thiolyase activity, catalyzing the synthesis of L-homocysteine from O-acetyl-L-homoserine and sulfide. This is Cystathionine gamma-synthase/O-acetylhomoserine (thiol)-lyase (metI) from Bacillus subtilis (strain 168).